Here is a 374-residue protein sequence, read N- to C-terminus: 3-dehydroquinate synthase (374 aa).

Belongs to the archaeal-type DHQ synthase family.

It catalyses the reaction 2-amino-2,3,7-trideoxy-D-lyxo-hept-6-ulosonate + NAD(+) + H2O = 3-dehydroquinate + NH4(+) + NADH + H(+). Its function is as follows. Catalyzes the oxidative deamination and cyclization of 2-amino-3,7-dideoxy-D-threo-hept-6-ulosonic acid (ADH) to yield 3-dehydroquinate (DHQ), which is fed into the canonical shikimic pathway of aromatic amino acid biosynthesis. The polypeptide is 3-dehydroquinate synthase (Methanothermobacter thermautotrophicus (strain ATCC 29096 / DSM 1053 / JCM 10044 / NBRC 100330 / Delta H) (Methanobacterium thermoautotrophicum)).